A 467-amino-acid polypeptide reads, in one-letter code: Asparagine--tRNA ligase (467 aa).

Belongs to the class-II aminoacyl-tRNA synthetase family. Homodimer.

It is found in the cytoplasm. The catalysed reaction is tRNA(Asn) + L-asparagine + ATP = L-asparaginyl-tRNA(Asn) + AMP + diphosphate + H(+). In Histophilus somni (strain 2336) (Haemophilus somnus), this protein is Asparagine--tRNA ligase.